A 313-amino-acid polypeptide reads, in one-letter code: Foldase protein PrsA (313 aa).

An N-terminal signal peptide occupies residues 1–20 (MKKKLLAGAITLLSVATLAA). Cysteine 21 carries N-palmitoyl cysteine lipidation. A lipid anchor (S-diacylglycerol cysteine) is attached at cysteine 21. In terms of domain architecture, PpiC spans 143-241 (TPDVTAQIIR…SQYYIVKLTK (99 aa)).

Belongs to the PrsA family.

The protein localises to the cell membrane. It carries out the reaction [protein]-peptidylproline (omega=180) = [protein]-peptidylproline (omega=0). Plays a major role in protein secretion by helping the post-translocational extracellular folding of several secreted proteins. The chain is Foldase protein PrsA from Streptococcus pneumoniae serotype 4 (strain ATCC BAA-334 / TIGR4).